The primary structure comprises 255 residues: MNQILLCSQILLLLFAVANCDGEHQLDSSMDLKSDSTKSAVLKNVAPKNDATQAEIAKDDVALKSGKKGDYVMDIDVCTMPLDDYPINNSKSRKNSSTLPSQILTDKPNQGSNQIALKALKHRLLMEQNNNLFLRNHSVSLMNEIEARKTDIIQARQLNIDLELELEALKRKLSEMNAQNARKPTKSCKKRPSKDIAPPANQLQEVIVKNTYRNKYLTLLTQLAQKINYEIANVNNPATDVPTGKSPSEGNPSTT.

Residues 1 to 18 (MNQILLCSQILLLLFAVA) form the signal peptide. The tract at residues 86-110 (PINNSKSRKNSSTLPSQILTDKPNQ) is disordered. Residues 87 to 110 (INNSKSRKNSSTLPSQILTDKPNQ) are compositionally biased toward polar residues. 3 N-linked (GlcNAc...) asparagine glycosylation sites follow: Asn-88, Asn-95, and Asn-136. Disordered stretches follow at residues 177-197 (NAQN…KDIA) and 235-255 (NNPA…PSTT). Over residues 183-192 (KPTKSCKKRP) the composition is skewed to basic residues. The span at 245 to 255 (KSPSEGNPSTT) shows a compositional bias: polar residues.

In terms of processing, it undergoes several cleavages as it is secreted and it is further processed in the recipient female. Main cells of the accessory glands of males.

The protein resides in the secreted. Its subcellular location is the extracellular space. Functionally, this protein is transferred from male to female's hemolymph during mating, affecting egglaying and behavior after mating. This is Accessory gland-specific peptide 26Aa (Acp26Aa) from Drosophila simulans (Fruit fly).